The primary structure comprises 190 residues: Crossover junction endodeoxyribonuclease RuvC (190 aa).

Active-site residues include Asp8, Glu67, and Asp139. Mg(2+) contacts are provided by Asp8, Glu67, and Asp139.

The protein belongs to the RuvC family. As to quaternary structure, homodimer which binds Holliday junction (HJ) DNA. The HJ becomes 2-fold symmetrical on binding to RuvC with unstacked arms; it has a different conformation from HJ DNA in complex with RuvA. In the full resolvosome a probable DNA-RuvA(4)-RuvB(12)-RuvC(2) complex forms which resolves the HJ. Requires Mg(2+) as cofactor.

The protein localises to the cytoplasm. It catalyses the reaction Endonucleolytic cleavage at a junction such as a reciprocal single-stranded crossover between two homologous DNA duplexes (Holliday junction).. Functionally, the RuvA-RuvB-RuvC complex processes Holliday junction (HJ) DNA during genetic recombination and DNA repair. Endonuclease that resolves HJ intermediates. Cleaves cruciform DNA by making single-stranded nicks across the HJ at symmetrical positions within the homologous arms, yielding a 5'-phosphate and a 3'-hydroxyl group; requires a central core of homology in the junction. The consensus cleavage sequence is 5'-(A/T)TT(C/G)-3'. Cleavage occurs on the 3'-side of the TT dinucleotide at the point of strand exchange. HJ branch migration catalyzed by RuvA-RuvB allows RuvC to scan DNA until it finds its consensus sequence, where it cleaves and resolves the cruciform DNA. This chain is Crossover junction endodeoxyribonuclease RuvC, found in Haemophilus influenzae (strain PittEE).